The sequence spans 425 residues: Glutamate-1-semialdehyde 2,1-aminomutase (425 aa).

Position 265 is an N6-(pyridoxal phosphate)lysine (lysine 265).

This sequence belongs to the class-III pyridoxal-phosphate-dependent aminotransferase family. HemL subfamily. As to quaternary structure, homodimer. It depends on pyridoxal 5'-phosphate as a cofactor.

The protein resides in the cytoplasm. It carries out the reaction (S)-4-amino-5-oxopentanoate = 5-aminolevulinate. The protein operates within porphyrin-containing compound metabolism; protoporphyrin-IX biosynthesis; 5-aminolevulinate from L-glutamyl-tRNA(Glu): step 2/2. The chain is Glutamate-1-semialdehyde 2,1-aminomutase from Laribacter hongkongensis (strain HLHK9).